The following is a 138-amino-acid chain: MSGTFLGFDFGTKSIGVAVGQRITATARPLPALKAQDGKPDWNVIEKLLKEWQPEAVIVGLPLNMDGTEQPLTARARNFANKIHGRFGVAIVLHDERLSTVEARAGLFEHGGYRALNKGSVDSASAVVILESYFEQSF.

The protein belongs to the YqgF nuclease family.

The protein resides in the cytoplasm. Could be a nuclease involved in processing of the 5'-end of pre-16S rRNA. The polypeptide is Putative pre-16S rRNA nuclease (Klebsiella pneumoniae (strain 342)).